Here is a 520-residue protein sequence, read N- to C-terminus: Catalase easC (520 aa).

Residue H71 is part of the active site. Residue Y361 participates in heme binding.

This sequence belongs to the catalase family. Heme is required as a cofactor.

Its pathway is alkaloid biosynthesis; ergot alkaloid biosynthesis. In terms of biological role, catalase; part of the gene cluster that mediates the biosynthesis of fumiclavanine C, a fungal ergot alkaloid. DmaW catalyzes the first step of ergot alkaloid biosynthesis by condensing dimethylallyl diphosphate (DMAP) and tryptophan to form 4-dimethylallyl-L-tryptophan. The second step is catalyzed by the methyltransferase easF that methylates 4-dimethylallyl-L-tryptophan in the presence of S-adenosyl-L-methionine, resulting in the formation of 4-dimethylallyl-L-abrine. The catalase easC and the FAD-dependent oxidoreductase easE then transform 4-dimethylallyl-L-abrine to chanoclavine-I which is further oxidized by EasD in the presence of NAD(+), resulting in the formation of chanoclavine-I aldehyde. EasA reduces chanoclavine-I aldehyde to dihydrochanoclavine-I aldehyde that spontaneously dehydrates to form 6,8-dimethyl-6,7-didehydroergoline. EasG then catalyzes the reduction of 6,8-dimethyl-6,7-didehydroergoline to form festuclavine. Hydrolysis of festuclavine by easM then leads to the formation of fumigaclavine B which is in turn acetylated by easN to fumigaclavine A. Finally, easL catalyzes the conversion of fumigaclavine A into fumigaclavine C by attaching a dimethylallyl moiety to C-2 of the indole nucleus. The sequence is that of Catalase easC from Aspergillus fumigatus (strain ATCC MYA-4609 / CBS 101355 / FGSC A1100 / Af293) (Neosartorya fumigata).